A 310-amino-acid polypeptide reads, in one-letter code: tRNA pseudouridine synthase B (310 aa).

The Nucleophile role is filled by Asp-49.

This sequence belongs to the pseudouridine synthase TruB family. Type 1 subfamily.

The enzyme catalyses uridine(55) in tRNA = pseudouridine(55) in tRNA. Functionally, responsible for synthesis of pseudouridine from uracil-55 in the psi GC loop of transfer RNAs. This chain is tRNA pseudouridine synthase B, found in Rhizobium johnstonii (strain DSM 114642 / LMG 32736 / 3841) (Rhizobium leguminosarum bv. viciae).